Consider the following 405-residue polypeptide: Phosphoglycerate kinase (405 aa).

Residues 24-26, Arg-40, 63-66, Arg-122, and Arg-162 each bind substrate; these read DFN and HLGR. Residues Lys-212, Glu-331, and 361-364 contribute to the ATP site; that span reads GGDS.

Belongs to the phosphoglycerate kinase family. As to quaternary structure, monomer.

It localises to the cytoplasm. It carries out the reaction (2R)-3-phosphoglycerate + ATP = (2R)-3-phospho-glyceroyl phosphate + ADP. Its pathway is carbohydrate degradation; glycolysis; pyruvate from D-glyceraldehyde 3-phosphate: step 2/5. This chain is Phosphoglycerate kinase, found in Corynebacterium aurimucosum (strain ATCC 700975 / DSM 44827 / CIP 107346 / CN-1) (Corynebacterium nigricans).